The primary structure comprises 634 residues: Carbon monoxide dehydrogenase 2 (634 aa).

Residues Cys-44, Cys-53, Cys-56, Cys-61, and Cys-73 each contribute to the [4Fe-4S] cluster site. [Ni-4Fe-5S] cluster contacts are provided by His-264, Cys-343, Cys-453, Cys-484, and Cys-525.

This sequence belongs to the Ni-containing carbon monoxide dehydrogenase family. Homodimer. [4Fe-4S] cluster serves as cofactor. It depends on [Ni-4Fe-5S] cluster as a cofactor.

It carries out the reaction CO + 2 oxidized [2Fe-2S]-[ferredoxin] + H2O = 2 reduced [2Fe-2S]-[ferredoxin] + CO2 + 2 H(+). In terms of biological role, CODH oxidizes carbon monoxide coupled, via CooF, to the reduction of a hydrogen cation by a hydrogenase (possibly CooH). This Methanosarcina mazei (strain ATCC BAA-159 / DSM 3647 / Goe1 / Go1 / JCM 11833 / OCM 88) (Methanosarcina frisia) protein is Carbon monoxide dehydrogenase 2 (cooS2).